Reading from the N-terminus, the 163-residue chain is Nucleotide-binding protein ECA1137 (163 aa).

Belongs to the YajQ family.

In terms of biological role, nucleotide-binding protein. The polypeptide is Nucleotide-binding protein ECA1137 (Pectobacterium atrosepticum (strain SCRI 1043 / ATCC BAA-672) (Erwinia carotovora subsp. atroseptica)).